Reading from the N-terminus, the 316-residue chain is Phosphate acetyltransferase (316 aa).

This sequence belongs to the phosphate acetyltransferase and butyryltransferase family.

It localises to the cytoplasm. It catalyses the reaction acetyl-CoA + phosphate = acetyl phosphate + CoA. It participates in metabolic intermediate biosynthesis; acetyl-CoA biosynthesis; acetyl-CoA from acetate: step 2/2. This Rhizobium meliloti (Ensifer meliloti) protein is Phosphate acetyltransferase (pta).